The chain runs to 267 residues: Putative glycosyltransferase 63 (267 aa).

Belongs to the glycosyltransferase group 1 family. Glycosyltransferase 4 subfamily.

This is Putative glycosyltransferase 63 (SIFV0063) from Sulfolobus islandicus filamentous virus (isolate Iceland/Hveragerdi) (SIFV).